A 612-amino-acid chain; its full sequence is 1,8-cineole synthase, chloroplastic (612 aa).

Residues 1–52 (MALVSGAPLASRSCLNKSLISSTHELKPLRRTILPTLRWKSATPSINMCLTT) constitute a chloroplast transit peptide. Mg(2+) is bound by residues Asp-363, Asp-367, and Asp-515. A DDXXD motif motif is present at residues 363-367 (DDIYD).

The protein belongs to the terpene synthase family. Tpsd subfamily. Requires Mg(2+) as cofactor. Mn(2+) serves as cofactor.

The protein resides in the plastid. It localises to the chloroplast. It catalyses the reaction (2E)-geranyl diphosphate + H2O = 1,8-cineole + diphosphate. It participates in terpene metabolism; oleoresin biosynthesis. Its function is as follows. Terpene synthase (TPS) involved in the biosynthesis of monoterpene natural products included in conifer oleoresin secretions and volatile emissions; these compounds contribute to biotic and abiotic stress defense against herbivores and pathogens. Catalyzes the conversion of (2E)-geranyl diphosphate (GPP) to 1,8-cineole. The polypeptide is 1,8-cineole synthase, chloroplastic (Picea engelmannii x Picea glauca (Hybrid white spruce)).